A 388-amino-acid chain; its full sequence is Succinate--CoA ligase [ADP-forming] subunit beta (388 aa).

An ATP-grasp domain is found at 9–244 (KEILRKYNVP…LDEEDANEIE (236 aa)). ATP contacts are provided by residues lysine 46, 53–55 (GRG), glutamate 99, alanine 102, and glutamate 107. The Mg(2+) site is built by asparagine 199 and aspartate 213. Residues asparagine 264 and 321 to 323 (GIM) contribute to the substrate site.

Belongs to the succinate/malate CoA ligase beta subunit family. As to quaternary structure, heterotetramer of two alpha and two beta subunits. Requires Mg(2+) as cofactor.

It catalyses the reaction succinate + ATP + CoA = succinyl-CoA + ADP + phosphate. It carries out the reaction GTP + succinate + CoA = succinyl-CoA + GDP + phosphate. It participates in carbohydrate metabolism; tricarboxylic acid cycle; succinate from succinyl-CoA (ligase route): step 1/1. In terms of biological role, succinyl-CoA synthetase functions in the citric acid cycle (TCA), coupling the hydrolysis of succinyl-CoA to the synthesis of either ATP or GTP and thus represents the only step of substrate-level phosphorylation in the TCA. The beta subunit provides nucleotide specificity of the enzyme and binds the substrate succinate, while the binding sites for coenzyme A and phosphate are found in the alpha subunit. This Cupriavidus taiwanensis (strain DSM 17343 / BCRC 17206 / CCUG 44338 / CIP 107171 / LMG 19424 / R1) (Ralstonia taiwanensis (strain LMG 19424)) protein is Succinate--CoA ligase [ADP-forming] subunit beta.